A 257-amino-acid polypeptide reads, in one-letter code: Outer membrane protein YaiO (257 aa).

The first 19 residues, M1–A19, serve as a signal peptide directing secretion.

It is found in the cell outer membrane. This chain is Outer membrane protein YaiO (yaiO), found in Escherichia coli (strain K12).